We begin with the raw amino-acid sequence, 177 residues long: Late embryogenesis abundant protein 1 (177 aa).

Residues 1 to 177 are disordered; it reads MASHDQSYKA…DKDHFPTNRH (177 aa). Over residues 28–39 the composition is skewed to basic and acidic residues; the sequence is IEDKAQAAKEKA. A compositionally biased stretch (low complexity) spans 40 to 89; the sequence is QQAAQTAKDKTSQTAQAAKEKTQQTAQAAKEKTQQTAQAAKDETQQTAQA. Tandem repeats lie at residues 53-63, 64-74, 75-85, and 86-96. Positions 53–96 are 4 X 11 AA approximate tandem repeats of T-A-Q-A-A-K-E-K-T-Q-Q; it reads TAQAAKEKTQQTAQAAKEKTQQTAQAAKDETQQTAQAAKDKTQQ. A compositionally biased stretch (basic and acidic residues) spans 90-117; sequence AKDKTQQTTEATKEKAQDTTGRAREKGS. Polar residues predominate over residues 119 to 142; the sequence is MGQSTKETAQSGKDNSAGFLQQTG. Basic and acidic residues predominate over residues 164–177; it reads NDDKDKDHFPTNRH.

The protein belongs to the LEA type 4 family. In terms of tissue distribution, highest expression is found in seeds. No expression detected in adult tissues.

This chain is Late embryogenesis abundant protein 1, found in Cicer arietinum (Chickpea).